The chain runs to 401 residues: 1-deoxy-D-xylulose 5-phosphate reductoisomerase (401 aa).

T11, G12, S13, I14, R38, N39, and N125 together coordinate NADPH. K126 provides a ligand contact to 1-deoxy-D-xylulose 5-phosphate. E127 contributes to the NADPH binding site. A Mn(2+)-binding site is contributed by D151. 4 residues coordinate 1-deoxy-D-xylulose 5-phosphate: S152, E153, S179, and H202. E153 contributes to the Mn(2+) binding site. G208 is a binding site for NADPH. The 1-deoxy-D-xylulose 5-phosphate site is built by S215, N220, K221, and E224. E224 lines the Mn(2+) pocket.

The protein belongs to the DXR family. The cofactor is Mg(2+). Mn(2+) serves as cofactor.

The enzyme catalyses 2-C-methyl-D-erythritol 4-phosphate + NADP(+) = 1-deoxy-D-xylulose 5-phosphate + NADPH + H(+). Its pathway is isoprenoid biosynthesis; isopentenyl diphosphate biosynthesis via DXP pathway; isopentenyl diphosphate from 1-deoxy-D-xylulose 5-phosphate: step 1/6. In terms of biological role, catalyzes the NADPH-dependent rearrangement and reduction of 1-deoxy-D-xylulose-5-phosphate (DXP) to 2-C-methyl-D-erythritol 4-phosphate (MEP). This chain is 1-deoxy-D-xylulose 5-phosphate reductoisomerase, found in Paraburkholderia xenovorans (strain LB400).